The sequence spans 224 residues: UPF0502 protein Psyr_2419 (224 aa).

Belongs to the UPF0502 family.

The protein is UPF0502 protein Psyr_2419 of Pseudomonas syringae pv. syringae (strain B728a).